Reading from the N-terminus, the 127-residue chain is Cyclin-dependent kinase 2-associated protein 2 (127 aa).

Positions 1–47 (MSYKPIAPAPSSTPGSSTPGPGTPVPTAGSVPSPSGSVPGAAAPFRP) are disordered. Residues 9 to 44 (APSSTPGSSTPGPGTPVPTAGSVPSPSGSVPGAAAP) are compositionally biased toward low complexity. The interaction with CDK2 stretch occupies residues 65–107 (PPGSQGSQSTYTDLLSVIEEMGKEIRPTYAGSKSAMERLKRGI).

This sequence belongs to the CDK2AP family. Component of the nucleosome remodeling and deacetylase (NuRD) repressor complex, composed of core proteins MTA1, MTA2, MTA3, RBBP4, RBBP7, HDAC1, HDAC2, MBD2, MBD3, and peripherally associated proteins CDK2AP1, CDK2AP2, GATAD2A, GATAD2B, CHD3, CHD4 and CHD5. The exact stoichiometry of the NuRD complex is unknown, and some subunits such as MBD2 and MBD3, GATAD2A and GATAD2B, and CHD3, CHD4 and CHD5 define mutually exclusive NuRD complexes. Interacts with CDK2AP1. Interacts with CDK2. Interacts with MAPK1. Post-translationally, phosphorylated by MAPK1 and CDK2. As to expression, oocytes (at protein level).

The protein localises to the cytoplasm. It localises to the nucleus. In terms of biological role, acts as a component of the histone deacetylase NuRD complex which participates in the remodeling of chromatin. Inhibits cell cycle G1/S phase transition by repressing CDK2 expression and activation; represses CDK2 activation by inhibiting its interaction with cyclin E and A. Plays a role in regulating the self-renewal of embryonic stem cells (ESCs) and in maintaining cell survival during terminal differentiation of ESCs. Regulates microtubule organization of metaphase II oocytes. In Mus musculus (Mouse), this protein is Cyclin-dependent kinase 2-associated protein 2 (Cdk2ap2).